Here is a 379-residue protein sequence, read N- to C-terminus: Stimulator of interferon genes protein (379 aa).

Topologically, residues 1–17 (MPYSNLHPSIPRPRSYR) are cytoplasmic. The tract at residues 1–190 (MPYSNLHPSI…MFNQLHNNML (190 aa)) is mediates interaction with ZDHHC1 and ZDHHC11. A helical transmembrane segment spans residues 18–34 (FKLAAFVLLVGSLMSLW). Topologically, residues 35–44 (MTGEPPSHTL) are lumenal. The chain crosses the membrane as a helical span at residues 45 to 69 (HYLALHVASQQLGLLLKKLCCLAEE). The Cytoplasmic segment spans residues 70–91 (LCHVQSRYQGSYWKAVRACVGS). Cys88 carries the S-palmitoyl cysteine lipid modification. Residues 92–106 (PICFMALILLSFYFY) form a helical membrane-spanning segment. Over 107–116 (CSLENTSDLR) the chain is Lumenal. The chain crosses the membrane as a helical span at residues 117-134 (LAWHLGILVLSKSLSMTL). Residues 135–379 (DLQSLAPAEV…QPLPLRTDLI (245 aa)) lie on the Cytoplasmic side of the membrane. Lys151 is covalently cross-linked (Glycyl lysine isopeptide (Lys-Gly) (interchain with G-Cter in ubiquitin)). The cyclic dinucleotide-binding domain (CBD) stretch occupies residues 153 to 340 (FNVAHGLAWS…RHIRQEEKEE (188 aa)). 162–167 (SYYIGY) contacts 2',3'-cGAMP. Gly166 provides a ligand contact to 3',3'-c-di-GMP. 2',3'-cUAMP is bound at residue Tyr167. A Glycyl lysine isopeptide (Lys-Gly) (interchain with G-Cter in ubiquitin) cross-link involves residue Lys236. Residue Arg238 participates in 2',3'-cUAMP binding. Residues 238 to 241 (RAYS) and Thr263 each bind 2',3'-cGAMP. Residues 238–241 (RAYS) and Thr263 each bind 3',3'-c-di-GMP. The residue at position 241 (Ser241) is a Phosphoserine. Thr263 provides a ligand contact to 2',3'-cUAMP. Residue Lys338 forms a Glycyl lysine isopeptide (Lys-Gly) (interchain with G-Cter in SUMO) linkage. Residues 340-379 (EVTMSGPPTSVAPRPSLLSQEPRLLISGMEQPLPLRTDLI) are C-terminal tail (CTT). Phosphoserine is present on Ser355. A phosphoserine; by TBK1 mark is found at Ser358 and Ser366. The pLxIS motif signature appears at 363-366 (LLIS).

This sequence belongs to the STING family. Homodimer; forms a homodimer in absence of cyclic nucleotide (c-di-GMP or cGAMP); 'Lys-63'-linked ubiquitination at Lys-151 is required for homodimerization. Homotetramer; in presence of cyclic nucleotide (c-di-GMP or cGAMP), forms tetramers and higher-order oligomers through side-by-side packing. Interacts (when phosphorylated) with IRF3; following activation and phosphorylation on the pLxIS motif by TBK1, recruits IRF3. Interacts with RIGI, MAVS and SSR2. Interacts with RNF5 and TRIM56. Interacts with TBK1; when homodimer, leading to subsequent production of IFN-beta. Interacts with IFIT1 and IFIT2. Interacts with TRIM29; this interaction induces STING1 ubiquitination and subsequent degradation. Associates with the MHC-II complex. Interacts with STEEP1; interaction takes place upon cGAMP-activation and STING1 phosphorylation by MAP3K7/TAK1 and promotes STING1 translocation to COPII vesicles. Interacts with SEC24A, SEC24B and SEC24C; promoting translocation to COPII vesicles. Interacts (when ubiquitinated) with SQSTM1; leading to relocalization to autophagosomes. Interacts with SURF4. Interacts with HNRNPA2B1. Interacts with ZDHHC1; ZDHHC1 constitutively interacts with STING1 and in presence of DNA viruses activates it by promoting its cGAMP-induced oligomerization and the recruitment of downstream signaling components. Interacts with ZDHHC11; in presence of DNA viruses promotes the recruitment of IRF3 to STING1. Interacts with TOMM70. Interacts with TAB1; promoting recruitment of TAB1 to the endoplasmic reticulum membrane and subsequent activation of MAP3K7/TAK1. Interacts (via transmembrane domain) with TMEM203. Interacts with DDX41. In terms of processing, phosphorylation by TBK1 leads to activation and production of IFN-beta. Following cyclic nucleotide (c-di-GMP or cGAMP)-binding, activation and translocation from the endoplasmic reticulum, STING1 is phosphorylated by TBK1 at Ser-366 in the pLxIS motif. The phosphorylated pLxIS motif constitutes an IRF3-binding motif, leading to recruitment of the transcription factor IRF3 to induce type-I interferons and other cytokines. Phosphorylated on tyrosine residues upon MHC-II aggregation. Dephosphorylation by PPP6C leads to inactivation and decreased production of IFN-beta. Phosphorylation at Ser-358 is also required to activate IRF3. Phosphorylation at Ser-355 by MAP3K7/TAK1 facilitates its interaction with STEEP1, promoting STING1 translocation to COPII vesicles. Post-translationally, ubiquitinated. Ubiquitinated via 'Lys-63'-linked ubiquitin chains in response to double-stranded DNA treatment, leading to relocalization to autophagosomes and subsequent degradation; this process is dependent on SQSTM1. 'Lys-63'-linked ubiquitination mediated by TRIM56 at Lys-151 promotes homodimerization and recruitment of the antiviral kinase TBK1 and subsequent production of IFN-beta. 'Lys-48'-linked polyubiquitination at Lys-151 occurring after viral infection is mediated by RNF5 and leads to proteasomal degradation. 'Lys-11'-linked polyubiquitination at Lys-151 by RNF26 leads to stabilize STING1: it protects STING1 from RNF5-mediated 'Lys-48'-linked polyubiquitination. 'Lys-33'-linked and 'Lys-48'-linked deubiquitinated by USP20; leading to its stabilization and promotion of innate antiviral response. 'Lys-48'-linked deubiquitinated by USP44; leading to its stabilization and promotion of innate antiviral response. Deubiquitinated by USP13; leading to inhibition of innate antiviral response. 'Lys-63'-linked deubiquitinated by USP49; leading to inhibition of the subsequent recruitment of TBK1 to the signaling complex. 'Lys-63'-linked ubiquitination mediated by RNF39 promotes the activation of the cGAS-STING pathway. Sumoylated at Lys-338 by TRIM38 during the early phase of viral infection, promoting its stability by preventing its relocalization to autophagosomes and subsequent degradation. Desumoylated by SENP2 during the late phase of viral infection. In terms of processing, palmitoylation takes place in the Golgi apparatus and creates a platform for the recruitment of TBK1.

The protein localises to the endoplasmic reticulum membrane. It is found in the cytoplasm. Its subcellular location is the perinuclear region. It localises to the endoplasmic reticulum-Golgi intermediate compartment membrane. The protein resides in the golgi apparatus membrane. The protein localises to the cytoplasmic vesicle. It is found in the autophagosome membrane. Its subcellular location is the mitochondrion outer membrane. It localises to the cell membrane. It carries out the reaction H(+)(in) = H(+)(out). In contrast to mouse protein, not activated by anticancer molecule 5,6-dimethylxanthenone 4-acetic acid (DMXAA). In terms of biological role, facilitator of innate immune signaling that acts as a sensor of cytosolic DNA from bacteria and viruses and promotes the production of type I interferon (IFN-alpha and IFN-beta). Innate immune response is triggered in response to non-CpG double-stranded DNA from viruses and bacteria delivered to the cytoplasm. Acts by binding cyclic dinucleotides: recognizes and binds cyclic di-GMP (c-di-GMP), a second messenger produced by bacteria, cyclic UMP-AMP (2',3'-cUAMP), and cyclic GMP-AMP (cGAMP), a messenger produced by CGAS in response to DNA virus in the cytosol. Upon binding to c-di-GMP, cUAMP or cGAMP, STING1 oligomerizes, translocates from the endoplasmic reticulum and is phosphorylated by TBK1 on the pLxIS motif, leading to recruitment and subsequent activation of the transcription factor IRF3 to induce expression of type I interferon and exert a potent anti-viral state. Exhibits 2',3' phosphodiester linkage-specific ligand recognition: can bind both 2'-3' linked cGAMP (2'-3'-cGAMP) and 3'-3' linked cGAMP but is preferentially activated by 2'-3' linked cGAMP. The preference for 2'-3'-cGAMP, compared to other linkage isomers is probably due to the ligand itself, whichs adopts an organized free-ligand conformation that resembles the STING1-bound conformation and pays low energy costs in changing into the active conformation. In addition to promote the production of type I interferons, plays a direct role in autophagy. Following cGAMP-binding, STING1 buds from the endoplasmic reticulum into COPII vesicles, which then form the endoplasmic reticulum-Golgi intermediate compartment (ERGIC). The ERGIC serves as the membrane source for WIPI2 recruitment and LC3 lipidation, leading to formation of autophagosomes that target cytosolic DNA or DNA viruses for degradation by the lysosome. Promotes autophagy by acting as a proton channel that directs proton efflux from the Golgi to facilitate MAP1LC3B/LC3B lipidation. The autophagy- and interferon-inducing activities can be uncoupled and autophagy induction is independent of TBK1 phosphorylation. Autophagy is also triggered upon infection by bacteria: following c-di-GMP-binding, which is produced by live Gram-positive bacteria, promotes reticulophagy. May be involved in translocon function, the translocon possibly being able to influence the induction of type I interferons. May be involved in transduction of apoptotic signals via its association with the major histocompatibility complex class II (MHC-II). The sequence is that of Stimulator of interferon genes protein from Rattus norvegicus (Rat).